The primary structure comprises 435 residues: Eukaryotic peptide chain release factor subunit 1-3 (435 aa).

Alanine 2 is modified (N-acetylalanine).

It belongs to the eukaryotic release factor 1 family. As to quaternary structure, heterodimer of two subunits, one of which binds GTP.

The protein localises to the cytoplasm. In terms of biological role, directs the termination of nascent peptide synthesis (translation) in response to the termination codons UAA, UAG and UGA. Modulates plant growth and development. The polypeptide is Eukaryotic peptide chain release factor subunit 1-3 (ERF1-3) (Arabidopsis thaliana (Mouse-ear cress)).